The primary structure comprises 48 residues: Cuticle protein 6 isoform b (48 aa).

This is Cuticle protein 6 isoform b from Limulus polyphemus (Atlantic horseshoe crab).